Consider the following 532-residue polypeptide: Probable bifunctional tRNA threonylcarbamoyladenosine biosynthesis protein (532 aa).

A kae1 region spans residues 1 to 323 (MRVLGVEGTA…FRPDEVSVTW (323 aa)). Residues His107 and His111 each contribute to the Fe cation site. Residues 128 to 132 (NASGA), Asp160, Gly173, Glu177, and Asn256 contribute to the L-threonylcarbamoyladenylate site. Asp284 contacts Fe cation. Positions 329–532 (PARDPGADAV…GRYQDDPETA (204 aa)) constitute a Protein kinase domain. ATP-binding positions include 338 to 346 (VRQGAEATV) and Lys355. The active-site Proton acceptor; for kinase activity is the Asp444.

This sequence in the N-terminal section; belongs to the KAE1 / TsaD family. It in the C-terminal section; belongs to the protein kinase superfamily. Tyr protein kinase family. BUD32 subfamily. As to quaternary structure, component of the KEOPS complex that consists of Kae1, Bud32, Cgi121 and Pcc1; the whole complex dimerizes. The cofactor is Fe(2+).

The protein resides in the cytoplasm. The catalysed reaction is L-seryl-[protein] + ATP = O-phospho-L-seryl-[protein] + ADP + H(+). The enzyme catalyses L-threonyl-[protein] + ATP = O-phospho-L-threonyl-[protein] + ADP + H(+). It carries out the reaction L-threonylcarbamoyladenylate + adenosine(37) in tRNA = N(6)-L-threonylcarbamoyladenosine(37) in tRNA + AMP + H(+). Functionally, required for the formation of a threonylcarbamoyl group on adenosine at position 37 (t(6)A37) in tRNAs that read codons beginning with adenine. Is a component of the KEOPS complex that is probably involved in the transfer of the threonylcarbamoyl moiety of threonylcarbamoyl-AMP (TC-AMP) to the N6 group of A37. The Kae1 domain likely plays a direct catalytic role in this reaction. The Bud32 domain probably displays kinase activity that regulates Kae1 function. The sequence is that of Probable bifunctional tRNA threonylcarbamoyladenosine biosynthesis protein from Halobacterium salinarum (strain ATCC 700922 / JCM 11081 / NRC-1) (Halobacterium halobium).